A 312-amino-acid polypeptide reads, in one-letter code: Oxidoreductase NAD-binding domain-containing protein 1 (312 aa).

The signal sequence occupies residues 1 to 17 (MACAAVMIPGLLRCSVG). Positions 50 to 186 (HMERTASVLR…GGVGINPLLS (137 aa)) constitute an FAD-binding FR-type domain. An NAD(+)-binding site is contributed by 178–183 (GVGINP).

This is Oxidoreductase NAD-binding domain-containing protein 1 (OXNAD1) from Homo sapiens (Human).